A 498-amino-acid polypeptide reads, in one-letter code: Pentatricopeptide repeat-containing protein At2g15980 (498 aa).

7 PPR repeats span residues 244 to 274 (NATT…MEEE), 280 to 314 (NVYS…GVVY), 315 to 349 (DIVA…GIEC), 350 to 384 (TCLT…GFEA), 385 to 423 (DGLT…MFYP), 424 to 458 (SRNC…GFKP), and 459 to 489 (SQET…MAES).

This sequence belongs to the PPR family. P subfamily.

The polypeptide is Pentatricopeptide repeat-containing protein At2g15980 (Arabidopsis thaliana (Mouse-ear cress)).